The sequence spans 159 residues: Eukaryotic translation initiation factor 5A-2 (159 aa).

Positions 1–10 (MSDDEHHFEA) are enriched in basic and acidic residues. The disordered stretch occupies residues 1-25 (MSDDEHHFEASESGASKTYPQSAGN). The residue at position 2 (Ser-2) is a Phosphoserine. Residues 13-24 (SGASKTYPQSAG) show a composition bias toward polar residues. Lys-51 carries the hypusine modification.

The protein belongs to the eIF-5A family. Homodimer. Interacts with AHK4 and AHP1. Cytokinin regulates the formation of the AHP1-AHK4-ELF5A-2 complex. Lys-51 undergoes hypusination, a unique post-translational modification that consists in the addition of a butylamino group from spermidine to lysine side chain, leading to the formation of the unusual amino acid hypusine. eIF-5As are the only known proteins to undergo this modification, which is essential for their function. In terms of tissue distribution, ubiquitous. In roots, expressed mostly inside the stele of the mature zone.

It is found in the cytoplasm. Its subcellular location is the nucleus. Translation factor that promotes translation elongation and termination, particularly upon ribosome stalling at specific amino acid sequence contexts. Binds between the exit (E) and peptidyl (P) site of the ribosome and promotes rescue of stalled ribosome: specifically required for efficient translation of polyproline-containing peptides as well as other motifs that stall the ribosome. Acts as a ribosome quality control (RQC) cofactor by joining the RQC complex to facilitate peptidyl transfer during CAT tailing step. Regulates cytokinin-mediated root protoxylem specification and represses secifically the expression of AHP6. Regulates the induction of programmed cell death caused by infection with virulent pathogen. The sequence is that of Eukaryotic translation initiation factor 5A-2 (ELF5A-2) from Arabidopsis thaliana (Mouse-ear cress).